The following is a 301-amino-acid chain: Ribosomal protein L11 methyltransferase (301 aa).

T152, G173, D195, and N236 together coordinate S-adenosyl-L-methionine.

The protein belongs to the methyltransferase superfamily. PrmA family.

Its subcellular location is the cytoplasm. It catalyses the reaction L-lysyl-[protein] + 3 S-adenosyl-L-methionine = N(6),N(6),N(6)-trimethyl-L-lysyl-[protein] + 3 S-adenosyl-L-homocysteine + 3 H(+). In terms of biological role, methylates ribosomal protein L11. This is Ribosomal protein L11 methyltransferase from Dictyoglomus thermophilum (strain ATCC 35947 / DSM 3960 / H-6-12).